A 327-amino-acid polypeptide reads, in one-letter code: tRNA N6-adenosine threonylcarbamoyltransferase (327 aa).

2 residues coordinate Fe cation: His109 and His113. Residues 132–136 (MVSGG), Asp165, Gly178, Asp182, and Asn268 contribute to the substrate site. Residue Asp296 coordinates Fe cation.

Belongs to the KAE1 / TsaD family. Forms a hexamer composed of two TsaB, TsaD and TsaE trimers. Fe(2+) serves as cofactor.

The protein localises to the cytoplasm. It catalyses the reaction L-threonylcarbamoyladenylate + adenosine(37) in tRNA = N(6)-L-threonylcarbamoyladenosine(37) in tRNA + AMP + H(+). Functionally, required for the formation of a threonylcarbamoyl group on adenosine at position 37 (t(6)A37) in tRNAs that read codons beginning with adenine. Is involved in the transfer of the threonylcarbamoyl moiety of threonylcarbamoyl-AMP (TC-AMP) to the N6 group of A37, together with TsaE and TsaB. TsaD likely plays a direct catalytic role in this reaction. This is tRNA N6-adenosine threonylcarbamoyltransferase from Thermotoga maritima (strain ATCC 43589 / DSM 3109 / JCM 10099 / NBRC 100826 / MSB8).